The sequence spans 129 residues: MRFRSQRAVCRSRNYSMYCCSRVFVRNPRLDRRYPQVKILAKLHFFFHFFFSFLLHLISPAVTGGITRAPFLCLGPRVPLFRLERPLHAARTSRRCAGAASVSVDGATVEAPPLWTASCRTTPQVRARA.

A helical transmembrane segment spans residues 46-66 (FFHFFFSFLLHLISPAVTGGI).

The protein localises to the membrane. This is an uncharacterized protein from Saccharomyces cerevisiae (strain ATCC 204508 / S288c) (Baker's yeast).